Here is a 290-residue protein sequence, read N- to C-terminus: Fat storage-inducing transmembrane protein 1 (290 aa).

Over 1–18 the chain is Lumenal; the sequence is MERGPVVGAGLGARARIR. A helical transmembrane segment spans residues 19-39; sequence TLLGCLVKVLLWVASALLYFG. Topologically, residues 40–54 are cytoplasmic; it reads SEQAARLLGSPCLRR. The helical transmembrane segment at 55–75 threads the bilayer; it reads LYHAWLAAVVIFGPLLQFHVN. Residues 76–94 lie on the Lumenal side of the membrane; the sequence is PRTIFASHGNFFNIKFVNS. A helical transmembrane segment spans residues 95–115; sequence AWGWTCTFLGGFVLLVVFLAT. The Cytoplasmic portion of the chain corresponds to 116–141; it reads RRVAVTARHLSRLVVGAAVWRGAGRA. A helical membrane pass occupies residues 142-162; the sequence is FLLIEDLTGSCFEPLPQGLLL. The Lumenal segment spans residues 163 to 187; that stretch reads HELPDRRSRLAAGHQWRGYTVSSHT. Histidine 186 is an active-site residue. The helical transmembrane segment at 188 to 208 threads the bilayer; sequence FLLTFCCLLMAEEAAVFAKYL. Over 209–220 the chain is Cytoplasmic; it reads AHGLPAGAPLRL. A helical transmembrane segment spans residues 221 to 241; that stretch reads VFLLNVLLLGLWNFLLLCTVI. At 242-249 the chain is on the lumenal side; that stretch reads YFHQYTHK. Histidine 244 is an active-site residue. Residues 250 to 270 traverse the membrane as a helical segment; it reads VVGAAVGTFAWYLTYGSWYHQ. Residues 271-290 are Cytoplasmic-facing; it reads PWSPGSPGHGLFTHPSRKHN.

The protein belongs to the FIT family. FIT1 subfamily.

Its subcellular location is the endoplasmic reticulum membrane. In terms of biological role, plays an important role in the formation of lipid droplets (LDs) which are storage organelles at the center of lipid and energy homeostasis. Directly binds to diacylglycerol (DAGs) and triacylglycerol. This is Fat storage-inducing transmembrane protein 1 from Sus scrofa (Pig).